The primary structure comprises 591 residues: MMRSHYCGQLNESLEGQEITLCGWVHRRRDHGGVIFLDIRDRDGLAQVVFDPDRAESFAAADRVRSEYVVKITGKVRLRPAGATNANMASGMIEVLGYELEVLNESETPPFPLNEFSDVGEETRLRYRFLDLRRPEMAEKLRLRSRMTTSIRRYLDENGFLDVETPILTRATPEGARDYLVPSRTHAGSFFALPQSPQLFKQLLMVAGFDRYYQIAKCFRDEDLRADRQPEFTQIDIETSFLDEKDIMGLTEGMIRNLFKEVLDLEFGEFPHMTFEEAMRRYGSDKPDLRNPLELVDVADQLKEVDFKVFSGPANDPKCRIAALRVPGGASMPRKQIDDYTKFVGIYGAKGLAYIKVNERAAGVEGLQSPIVKNIPEANLNVILDRVGAVDGDIVFFGADKAKIVSEALGALRIKLGHDLKLLTCEWAPMWVVDFPMFEENDDGSFSALHHPFTAPKCSPEELEANPAGALSRAYDMVLNGTELGGGSIRIHRKEMQQAVFRLLGINEAEQEEKFGFLLDALKYGAPPHGGLAFGLDRLVMLMTGAQSIREVIAFPKTQSAADVMTQAPGVVDAKALRELHIRLRETPKAE.

Glu174 contacts L-aspartate. The tract at residues 198 to 201 is aspartate; it reads QLFK. Arg220 serves as a coordination point for L-aspartate. ATP contacts are provided by residues 220 to 222 and Gln229; that span reads RDE. His450 lines the L-aspartate pocket. Glu483 is an ATP binding site. Arg490 serves as a coordination point for L-aspartate. 535–538 lines the ATP pocket; the sequence is GLDR.

Belongs to the class-II aminoacyl-tRNA synthetase family. Type 1 subfamily. In terms of assembly, homodimer.

The protein localises to the cytoplasm. It catalyses the reaction tRNA(Asx) + L-aspartate + ATP = L-aspartyl-tRNA(Asx) + AMP + diphosphate. Its function is as follows. Aspartyl-tRNA synthetase with relaxed tRNA specificity since it is able to aspartylate not only its cognate tRNA(Asp) but also tRNA(Asn). Reaction proceeds in two steps: L-aspartate is first activated by ATP to form Asp-AMP and then transferred to the acceptor end of tRNA(Asp/Asn). The polypeptide is Aspartate--tRNA(Asp/Asn) ligase (Pseudomonas fluorescens (strain Pf0-1)).